The following is a 266-amino-acid chain: Large ribosomal subunit protein uL4 (266 aa).

This sequence belongs to the universal ribosomal protein uL4 family. Part of the 50S ribosomal subunit.

Functionally, one of the primary rRNA binding proteins, this protein initially binds near the 5'-end of the 23S rRNA. It is important during the early stages of 50S assembly. It makes multiple contacts with different domains of the 23S rRNA in the assembled 50S subunit and ribosome. Forms part of the polypeptide exit tunnel. The protein is Large ribosomal subunit protein uL4 of Sulfurisphaera tokodaii (strain DSM 16993 / JCM 10545 / NBRC 100140 / 7) (Sulfolobus tokodaii).